Consider the following 1024-residue polypeptide: Non-canonical nonribosomal peptide synthetase FrzA (1024 aa).

Positions 29-425 are adenylation (A) domain; it reads RAQKSHQAIA…GRRDHQVKVR (397 aa). A Carrier domain is found at 534-611; the sequence is NASQDVRSAL…ALTSIIKQRL (78 aa). Ser-571 is subject to O-(pantetheine 4'-phosphoryl)serine. Residues 655–898 enclose the Thioester reductase (TE) domain; it reads LTGGTGFVGA…VPVDYVNAAI (244 aa).

Belongs to the NRP synthetase family. It depends on pantetheine 4'-phosphate as a cofactor.

It carries out the reaction L-tyrosinal + AMP + diphosphate + NADP(+) = L-tyrosine + ATP + NADPH + H(+). It functions in the pathway secondary metabolite biosynthesis. Non-canonical nonribosomal peptide synthetase; part of the gene cluster that mediates the biosynthesis of the alkaloid (-)-FR901483, a potent immunosuppressant that shows efficacy in animal models and a probable inhibitor of purine nucleotide biosynthesis by targeting phosphoribosylpyrophosphate amidotransferase (PPAT). Within the pathway, FrzA catalyzes the reduction of L-tyrosine via its C-terminal reductase domain to produce L-tyrosinal. The biosynthesis of (-)-FR901483 starts with the condensation of two L-tyrosines to yield (S,S)-dityrosyl-piperazine. This process occurs in 3 steps with the non-canonical nonribosomal peptide synthetase FrzA catalyzing the reduction of L-tyrosine into L-tyrosinal, the spontaneous condensation of 2 L-tyrosinal units, and the subsequent reduction by the NmrA-like family domain-containing oxidoreductase FrzB. The cytochrome P450 monooxygenase FrzC then performs coupling between N10 and C1' to morph the piperazine into a 1,4-diazabicyclo[3.2.1]octane spiro-fused to a 2,5-cyclohexadienone. The dienone portion is further reduced to cyclohexanone by the flavin-dependent reductase FrzD. The methyltranserases (MTs) FrzE and FrzF are then involved in the methylation at the C10' amine and the C4 phenolic oxygen, respectively. The order of the two MTs appear to be interchangeable. Cleavage of the C9-N10' bond by the dioxygenase FrzG then leads to formation of a conjugated iminium. In addition to the oxidation of C9, an additional dehydrogenation between C7 and C8 can occur to give a likely shunt product. The next biosynthetic step is the intramolecular aldol condensation catalyzed by the newly identified aldolase FrzH to yield an aza-tricyclic product with the formation of a C9-C3' bond. The short-chain dehydrogenase/reductase FrzI then produces dephospho-(-)-FR901483 that is phosphorylated at C4'-OH into (-)-FR901483 by the phosphotransferase FrzJ. This is Non-canonical nonribosomal peptide synthetase FrzA from Cladobotryum sp.